Reading from the N-terminus, the 864-residue chain is DNA mismatch repair protein MutS (864 aa).

607–614 (GPNMGGKS) serves as a coordination point for ATP.

Belongs to the DNA mismatch repair MutS family.

Functionally, this protein is involved in the repair of mismatches in DNA. It is possible that it carries out the mismatch recognition step. This protein has a weak ATPase activity. This chain is DNA mismatch repair protein MutS, found in Neisseria gonorrhoeae (strain ATCC 700825 / FA 1090).